Reading from the N-terminus, the 407-residue chain is Imidazolonepropionase (407 aa).

Residues histidine 68 and histidine 70 each contribute to the Fe(3+) site. Zn(2+) contacts are provided by histidine 68 and histidine 70. 4-imidazolone-5-propanoate-binding residues include arginine 77, tyrosine 140, and histidine 173. Residue tyrosine 140 participates in N-formimidoyl-L-glutamate binding. A Fe(3+)-binding site is contributed by histidine 238. Histidine 238 is a Zn(2+) binding site. Position 241 (glutamine 241) interacts with 4-imidazolone-5-propanoate. Residue aspartate 313 coordinates Fe(3+). Aspartate 313 contacts Zn(2+). N-formimidoyl-L-glutamate contacts are provided by asparagine 315 and glycine 317. Threonine 318 is a binding site for 4-imidazolone-5-propanoate.

The protein belongs to the metallo-dependent hydrolases superfamily. HutI family. Zn(2+) serves as cofactor. The cofactor is Fe(3+).

The protein resides in the cytoplasm. It carries out the reaction 4-imidazolone-5-propanoate + H2O = N-formimidoyl-L-glutamate. Its pathway is amino-acid degradation; L-histidine degradation into L-glutamate; N-formimidoyl-L-glutamate from L-histidine: step 3/3. Catalyzes the hydrolytic cleavage of the carbon-nitrogen bond in imidazolone-5-propanoate to yield N-formimidoyl-L-glutamate. It is the third step in the universal histidine degradation pathway. The chain is Imidazolonepropionase from Burkholderia cenocepacia (strain HI2424).